The following is a 476-amino-acid chain: 23S rRNA (uracil(1939)-C(5))-methyltransferase RlmD (476 aa).

The 55-residue stretch at 1–55 folds into the TRAM domain; sequence MVDEVLKIESLDLEARGIARRDGKVVFVEGALPGERVYAATVRRKPSYEIARVET. [4Fe-4S] cluster-binding residues include Cys-68, Cys-74, Cys-77, and Cys-156. S-adenosyl-L-methionine contacts are provided by Gln-265, Phe-294, Asn-299, Glu-315, Asn-343, and Asp-364. Cys-394 functions as the Nucleophile in the catalytic mechanism.

This sequence belongs to the class I-like SAM-binding methyltransferase superfamily. RNA M5U methyltransferase family. RlmD subfamily.

It catalyses the reaction uridine(1939) in 23S rRNA + S-adenosyl-L-methionine = 5-methyluridine(1939) in 23S rRNA + S-adenosyl-L-homocysteine + H(+). Its function is as follows. Catalyzes the formation of 5-methyl-uridine at position 1939 (m5U1939) in 23S rRNA. This Bordetella avium (strain 197N) protein is 23S rRNA (uracil(1939)-C(5))-methyltransferase RlmD.